Consider the following 232-residue polypeptide: MDAVAAEPVSSSMAGLPAQLRDLGQQDYAPVWRAMQRFTDAREEYTADEIWVVEHAPVFTLGQAGKPEHVLAPGEIPVLQVDRGGQVTYHGPGQLVVYPLLDLRRLKIGVRDYVCKIEQALIDTLDEWNIVAERRDGAPGVYVGGAKIAALGIRVRRGCTFHGLSFNVAMDLQPFHRINPCGYQGLQVTSVLDLGGPSGMDAVKAVLLDQLARQFGLVLQPTSALPDLSLPA.

In terms of domain architecture, BPL/LPL catalytic spans 44–219; sequence EYTADEIWVV…QLARQFGLVL (176 aa). Residues 83–90, 150–152, and 163–165 contribute to the substrate site; these read RGGQVTYH, ALG, and GLS. Catalysis depends on cysteine 181, which acts as the Acyl-thioester intermediate.

It belongs to the LipB family.

It is found in the cytoplasm. The catalysed reaction is octanoyl-[ACP] + L-lysyl-[protein] = N(6)-octanoyl-L-lysyl-[protein] + holo-[ACP] + H(+). It functions in the pathway protein modification; protein lipoylation via endogenous pathway; protein N(6)-(lipoyl)lysine from octanoyl-[acyl-carrier-protein]: step 1/2. Catalyzes the transfer of endogenously produced octanoic acid from octanoyl-acyl-carrier-protein onto the lipoyl domains of lipoate-dependent enzymes. Lipoyl-ACP can also act as a substrate although octanoyl-ACP is likely to be the physiological substrate. The sequence is that of Octanoyltransferase from Xanthomonas axonopodis pv. citri (strain 306).